Here is a 62-residue protein sequence, read N- to C-terminus: Histone H1.2, embryonic (62 aa).

An H15 domain is found at 1–53 (HVVAAITALKERGGSSMKKQSVFIKKALKSGVEKGTLVQVKGKGASGSFKLGK).

It belongs to the histone H1/H5 family.

The protein localises to the nucleus. It is found in the chromosome. In terms of biological role, histones H1 are necessary for the condensation of nucleosome chains into higher-order structures. In Parechinus angulosus (Angulate sea urchin), this protein is Histone H1.2, embryonic.